Reading from the N-terminus, the 129-residue chain is Sigma factor-binding protein Crl (129 aa).

An essential for activity region spans residues 99–119; that stretch reads TQAEFHKKLVKTLRERFEISV.

It belongs to the Crl family.

It localises to the cytoplasm. In terms of biological role, binds to the sigma-S subunit of RNA polymerase, activating expression of sigma-S-regulated genes. Stimulates RNA polymerase holoenzyme formation and may bind to several other sigma factors, such as sigma-70 and sigma-32. This Vibrio cholerae serotype O1 (strain ATCC 39541 / Classical Ogawa 395 / O395) protein is Sigma factor-binding protein Crl.